A 528-amino-acid polypeptide reads, in one-letter code: Phosphoenolpyruvate carboxykinase (ATP) (528 aa).

The substrate site is built by R56, Y192, and K198. Residues K198, H217, and 233-241 contribute to the ATP site; that span reads GLSGTGKTT. Residues K198 and H217 each contribute to the Mn(2+) site. D254 is a binding site for Mn(2+). Positions 282, 319, and 444 each coordinate ATP. R319 serves as a coordination point for substrate.

It belongs to the phosphoenolpyruvate carboxykinase (ATP) family. It depends on Mn(2+) as a cofactor.

Its subcellular location is the cytoplasm. It catalyses the reaction oxaloacetate + ATP = phosphoenolpyruvate + ADP + CO2. The protein operates within carbohydrate biosynthesis; gluconeogenesis. Functionally, involved in the gluconeogenesis. Catalyzes the conversion of oxaloacetate (OAA) to phosphoenolpyruvate (PEP) through direct phosphoryl transfer between the nucleoside triphosphate and OAA. This chain is Phosphoenolpyruvate carboxykinase (ATP), found in Geobacillus kaustophilus (strain HTA426).